The chain runs to 1826 residues: Transcription initiation factor TFIID subunit 1-like (1826 aa).

Disordered regions lie at residues 118–141, 532–555, and 1252–1276; these read DESQ…YDED, IPDE…SSLK, and RLKR…MKER. The span at 1252–1268 shows a compositional bias: basic and acidic residues; that stretch reads RLKRNQEKEKLKGPPEK. A Nuclear localization signal motif is present at residues 1370 to 1377; the sequence is PPKKKRRV. Bromo domains are found at residues 1395–1503 and 1517–1626; these read RRRT…LKEK and LLDD…ITEY. A disordered region spans residues 1648–1826; it reads AELESLDPMT…SGEHKDGHGK (179 aa). Over residues 1660–1700 the composition is skewed to polar residues; it reads PYTSQPPDMYDTNTSLSTSRDASVFQDESNLSVLDISTATP. Acidic residues-rich tracts occupy residues 1714-1729, 1740-1750, and 1768-1783; these read EDSD…EEED, GDGDLADEEEG, and EGED…EEGD. A compositionally biased stretch (polar residues) spans 1787-1797; that stretch reads SAIQLSESGSD. Positions 1817-1826 are enriched in basic and acidic residues; the sequence is SGEHKDGHGK.

The protein belongs to the TAF1 family. Can bind directly to TATA-box binding protein (TBP). Interacts (via bromo domains) with acetylated lysine residues on the N-terminus of histone H1.4, H2A, H2B, H3 and H4 (in vitro). As to expression, testis specific, expressed apparently in germ cells.

Its subcellular location is the nucleus. Its function is as follows. May act as a functional substitute for TAF1/TAFII250 during male meiosis, when sex chromosomes are transcriptionally silenced. The chain is Transcription initiation factor TFIID subunit 1-like (TAF1L) from Homo sapiens (Human).